Reading from the N-terminus, the 304-residue chain is C-type lectin domain-containing protein 141 (304 aa).

The signal sequence occupies residues Met-1–Ser-19. The segment at Gly-29–Val-100 is disordered. Low complexity predominate over residues Thr-51–Lys-99.

In Caenorhabditis elegans, this protein is C-type lectin domain-containing protein 141 (clec-141).